A 180-amino-acid polypeptide reads, in one-letter code: Large ribosomal subunit protein uL5 (180 aa).

Belongs to the universal ribosomal protein uL5 family. In terms of assembly, part of the 50S ribosomal subunit; part of the 5S rRNA/L5/L18/L25 subcomplex. Contacts the 5S rRNA and the P site tRNA. Forms a bridge to the 30S subunit in the 70S ribosome.

Its function is as follows. This is one of the proteins that bind and probably mediate the attachment of the 5S RNA into the large ribosomal subunit, where it forms part of the central protuberance. In the 70S ribosome it contacts protein S13 of the 30S subunit (bridge B1b), connecting the 2 subunits; this bridge is implicated in subunit movement. Contacts the P site tRNA; the 5S rRNA and some of its associated proteins might help stabilize positioning of ribosome-bound tRNAs. The polypeptide is Large ribosomal subunit protein uL5 (Limosilactobacillus fermentum (strain NBRC 3956 / LMG 18251) (Lactobacillus fermentum)).